Here is a 595-residue protein sequence, read N- to C-terminus: Laccase-18 (595 aa).

An N-terminal signal peptide occupies residues 1 to 29 (MEKLSTAASLFCVVVAATALAMAVVGGEA). Plastocyanin-like domains follow at residues 37–153 (MVHE…PRNG) and 162–316 (KDVP…YAGA). Residues N42 and N48 are each glycosylated (N-linked (GlcNAc...) asparagine). Positions 87 and 89 each coordinate Cu cation. Residue N121 is glycosylated (N-linked (GlcNAc...) asparagine). The Cu cation site is built by H132 and H134. 7 N-linked (GlcNAc...) asparagine glycosylation sites follow: N206, N345, N382, N402, N409, N439, and N470. The region spanning 429–571 (DFPVRPPRPF…ATAFIVEDGP (143 aa)) is the Plastocyanin-like 3 domain. 8 residues coordinate Cu cation: N488, H491, H493, H550, C551, H552, H556, and M561. A disordered region spans residues 570–595 (GPTPETSLPPPPPEFKRCGTNGLSQP).

It belongs to the multicopper oxidase family. Cu cation serves as cofactor.

It localises to the secreted. The protein localises to the extracellular space. It is found in the apoplast. The enzyme catalyses 4 hydroquinone + O2 = 4 benzosemiquinone + 2 H2O. In terms of biological role, lignin degradation and detoxification of lignin-derived products. The sequence is that of Laccase-18 (LAC18) from Oryza sativa subsp. japonica (Rice).